Here is a 532-residue protein sequence, read N- to C-terminus: Wee1-like protein kinase 2 (532 aa).

Residues 123–166 (INPFTPDTVRRNSEHYKRKSQRSDDDEDYGPRSKEIQNSSEDES) form a disordered region. The region spanning 188–465 (FLELACIGVG…RHDVLCKERA (278 aa)) is the Protein kinase domain. ATP is bound by residues 194–202 (IGVGEFGSV) and K217. The active-site Proton acceptor is D315. Positions 320 and 354 each coordinate Mg(2+). Positions 469 to 495 (ATQLRKELNVEKFRTAMLERELKEARL) form a coiled coil.

It belongs to the protein kinase superfamily. Ser/Thr protein kinase family. WEE1 subfamily.

It localises to the nucleus. It carries out the reaction L-tyrosyl-[protein] + ATP = O-phospho-L-tyrosyl-[protein] + ADP + H(+). In terms of biological role, oocyte-specific protein tyrosine kinase that phosphorylates and inhibits cdk1 and acts as a key regulator of meiosis. Required to maintain meiotic arrest in oocytes by phosphorylating cdk1 at 'Tyr-15', leading to inhibit cdk1 activity and prevent meiotic reentry. The protein is Wee1-like protein kinase 2 (wee2) of Danio rerio (Zebrafish).